Here is a 1311-residue protein sequence, read N- to C-terminus: Nephrocystin-3 (1311 aa).

Residues 81–183 (SKNNEIASMQ…LQRLQAQGIQ (103 aa)) adopt a coiled-coil conformation. TPR repeat units follow at residues 889–923 (LSYWQLVGKDKISMASEYFDALKQYERSCEGEEKM), 927–960 (ADLYETLGRFLKDLGLLSQAVTPLQRSLEIRETA), 969–1002 (AQSLHQLAGVYVQSKKFGNAEQLYKQALEISENA), 1011–1044 (ARELDALAVLYQKQNKFEQAEQLRKKSLKIRQKS), 1077–1110 (ARTLNELGVLYYLQNNLETAETFLKRSLEMRERV), 1119–1152 (AQSINNLAALYNEKKQYDKAEELYERALDIRRRA), 1161–1194 (AYTVKHLAVLYKRKGKLDKAVPLYELAVEIRQKS), 1203–1236 (ATALVNLAVLYCQMKKQAEASPLYERAMKIYEDS), and 1245–1278 (GETLKNLAVLRYEEGDFEKAAELYKRAMEIKETE).

The protein resides in the cell projection. The protein localises to the cilium. In terms of biological role, required for normal ciliary development and function. Inhibits disheveled-1-induced canonical Wnt-signaling activity and may also play a role in the control of non-canonical Wnt signaling that regulates planar cell polarity. Probably acts as a molecular switch between different Wnt signaling pathways. Required for proper convergent extension cell movements. This is Nephrocystin-3 (nphp3) from Xenopus tropicalis (Western clawed frog).